Here is a 93-residue protein sequence, read N- to C-terminus: Integration host factor subunit beta (93 aa).

This sequence belongs to the bacterial histone-like protein family. In terms of assembly, heterodimer of an alpha and a beta chain.

Functionally, this protein is one of the two subunits of integration host factor, a specific DNA-binding protein that functions in genetic recombination as well as in transcriptional and translational control. In Tolumonas auensis (strain DSM 9187 / NBRC 110442 / TA 4), this protein is Integration host factor subunit beta.